A 265-amino-acid polypeptide reads, in one-letter code: Octanoyltransferase (265 aa).

The 220-residue stretch at 35 to 254 (DEVPDTVLLL…HLRDVLENAE (220 aa)) folds into the BPL/LPL catalytic domain. Substrate-binding positions include 73–80 (RGGKITWH), 184–186 (AIG), and 197–199 (GFA). Catalysis depends on C215, which acts as the Acyl-thioester intermediate.

The protein belongs to the LipB family.

Its subcellular location is the cytoplasm. The catalysed reaction is octanoyl-[ACP] + L-lysyl-[protein] = N(6)-octanoyl-L-lysyl-[protein] + holo-[ACP] + H(+). It participates in protein modification; protein lipoylation via endogenous pathway; protein N(6)-(lipoyl)lysine from octanoyl-[acyl-carrier-protein]: step 1/2. Its function is as follows. Catalyzes the transfer of endogenously produced octanoic acid from octanoyl-acyl-carrier-protein onto the lipoyl domains of lipoate-dependent enzymes. Lipoyl-ACP can also act as a substrate although octanoyl-ACP is likely to be the physiological substrate. The chain is Octanoyltransferase from Streptomyces coelicolor (strain ATCC BAA-471 / A3(2) / M145).